The chain runs to 320 residues: GTPase Era (320 aa).

The 169-residue stretch at 25–193 folds into the Era-type G domain; the sequence is HCGFIAIVGR…RKHVRNHLPK (169 aa). The segment at 33 to 40 is G1; the sequence is GRPNVGKS. Residue 33–40 coordinates GTP; sequence GRPNVGKS. Positions 59-63 are G2; the sequence is QTTRH. Residues 80 to 83 form a G3 region; it reads DTPG. Residues 80 to 84 and 142 to 145 each bind GTP; these read DTPGL and NKVD. Positions 142-145 are G4; the sequence is NKVD. A G5 region spans residues 172 to 174; it reads ISA. One can recognise a KH type-2 domain in the interval 216 to 302; the sequence is VREKLMRFTG…YLETWVKVKS (87 aa).

Belongs to the TRAFAC class TrmE-Era-EngA-EngB-Septin-like GTPase superfamily. Era GTPase family. In terms of assembly, monomer.

The protein resides in the cytoplasm. It localises to the cell inner membrane. In terms of biological role, an essential GTPase that binds both GDP and GTP, with rapid nucleotide exchange. Plays a role in 16S rRNA processing and 30S ribosomal subunit biogenesis and possibly also in cell cycle regulation and energy metabolism. The sequence is that of GTPase Era from Vibrio parahaemolyticus serotype O3:K6 (strain RIMD 2210633).